Reading from the N-terminus, the 347-residue chain is MLHTTQLYQHVPETRWPIVYSPRYNITFMGLEKLHPFDAGKWGKVINFLKEEKLLSDSMLVEAREASEEDLLVVHTRRYLNELKWSFAVATITEIPPVIFLPNFLVQRKVLRPLRTQTGGTIMAGKLAVERGWAINVGGGFHHCSSDRGGGFCAYADITLAIKFLFERVEGISRATIIDLDAHQGNGHERDFMDDKRVYIMDVYNRHIYPGDRFAKQAIRRKVELEWGTEDDEYLDKVERNIEKSLQEHLPDVVVYNAGTDILEGDRLGGLSISPAGIVKRDELVFRMVRGRHVPILMVTSGGYQKRTARIIADSILNLFGLGLIGPESPSISAQNSDTPLLPPAVP.

Residues 14–318 form a histone deacetylase region; it reads TRWPIVYSPR…ARIIADSILN (305 aa). The active site involves histidine 143.

This sequence belongs to the histone deacetylase family. Interacts with HDAC6.

It is found in the nucleus. It carries out the reaction N(6)-acetyl-L-lysyl-[histone] + H2O = L-lysyl-[histone] + acetate. In terms of biological role, responsible for the deacetylation of lysine residues on the N-terminal part of the core histones (H2A, H2B, H3 and H4). Histone deacetylation gives a tag for epigenetic repression and plays an important role in transcriptional regulation, cell cycle progression and developmental events. Histone deacetylases act via the formation of large multiprotein complexes. The chain is Histone deacetylase 11 (HDAC11) from Macaca fascicularis (Crab-eating macaque).